We begin with the raw amino-acid sequence, 729 residues long: 1,4-alpha-glucan branching enzyme GlgB (729 aa).

Catalysis depends on aspartate 409, which acts as the Nucleophile. The Proton donor role is filled by glutamate 462.

It belongs to the glycosyl hydrolase 13 family. GlgB subfamily. Monomer.

The catalysed reaction is Transfers a segment of a (1-&gt;4)-alpha-D-glucan chain to a primary hydroxy group in a similar glucan chain.. The protein operates within glycan biosynthesis; glycogen biosynthesis. Catalyzes the formation of the alpha-1,6-glucosidic linkages in glycogen by scission of a 1,4-alpha-linked oligosaccharide from growing alpha-1,4-glucan chains and the subsequent attachment of the oligosaccharide to the alpha-1,6 position. This is 1,4-alpha-glucan branching enzyme GlgB from Saccharophagus degradans (strain 2-40 / ATCC 43961 / DSM 17024).